A 266-amino-acid polypeptide reads, in one-letter code: Undecaprenyl-diphosphatase (266 aa).

8 helical membrane-spanning segments follow: residues 1-21, 39-59, 87-107, 111-131, 144-164, 183-203, 218-238, and 244-264; these read METF…FLPI, QGLS…VIYF, WWII…KDFI, FRNT…LWAA, MGWK…IPGT, AAAR…ALLV, ALGL…HFFL, and IGMT…LGLL.

This sequence belongs to the UppP family.

The protein resides in the cell inner membrane. The catalysed reaction is di-trans,octa-cis-undecaprenyl diphosphate + H2O = di-trans,octa-cis-undecaprenyl phosphate + phosphate + H(+). Its function is as follows. Catalyzes the dephosphorylation of undecaprenyl diphosphate (UPP). Confers resistance to bacitracin. This chain is Undecaprenyl-diphosphatase, found in Shewanella frigidimarina (strain NCIMB 400).